The chain runs to 667 residues: DNA ligase (667 aa).

NAD(+) is bound by residues 34-38, 83-84, and Glu117; these read DYEFD and SL. Lys119 serves as the catalytic N6-AMP-lysine intermediate. NAD(+) is bound by residues Arg140, Glu176, Lys289, and Lys313. Zn(2+) contacts are provided by Cys407, Cys410, Cys425, and Cys431. Positions 591–667 constitute a BRCT domain; that stretch reads QVNRNFEGMS…ISEDEFMGMM (77 aa).

Belongs to the NAD-dependent DNA ligase family. LigA subfamily. It depends on Mg(2+) as a cofactor. Requires Mn(2+) as cofactor.

The enzyme catalyses NAD(+) + (deoxyribonucleotide)n-3'-hydroxyl + 5'-phospho-(deoxyribonucleotide)m = (deoxyribonucleotide)n+m + AMP + beta-nicotinamide D-nucleotide.. In terms of biological role, DNA ligase that catalyzes the formation of phosphodiester linkages between 5'-phosphoryl and 3'-hydroxyl groups in double-stranded DNA using NAD as a coenzyme and as the energy source for the reaction. It is essential for DNA replication and repair of damaged DNA. The protein is DNA ligase of Chlorobium chlorochromatii (strain CaD3).